The chain runs to 188 residues: mRNA transport factor GFD1 (188 aa).

Residues 1–128 (MPLESIWADA…KTQSKQDTAS (128 aa)) are disordered. Basic residues predominate over residues 18-28 (KQKPSHKRSNN). The span at 29 to 44 (NKKNNNSRWSNESSSN) shows a compositional bias: low complexity. Positions 59 to 79 (GNHESKTKNKIKETLPREKKP) are enriched in basic and acidic residues. S87, S106, and S111 each carry phosphoserine. Residues 112-128 (PSKMKTTKTQSKQDTAS) show a composition bias toward low complexity. A coiled-coil region spans residues 119 to 164 (KTQSKQDTASKMKLLKKKIEEQREILQKTHHKNQQQQVLMDFLNDE).

In terms of assembly, interacts with GLE1, NUP42, NAB2, ZDS1 and probably DBP5. Forms a complex with GLE1 and NAB2.

It is found in the cytoplasm. It localises to the nucleus. The protein localises to the nuclear pore complex. The protein resides in the nucleus membrane. In terms of biological role, high-copy suppressor of mutant alleles of ATP-dependent RNA helicase DBP5, which is involved in mRNA export from the nucleus. It may also play an important role in a late stage of NAB2-mRNA export. The sequence is that of mRNA transport factor GFD1 (GFD1) from Saccharomyces cerevisiae (strain ATCC 204508 / S288c) (Baker's yeast).